The chain runs to 1388 residues: Rho-associated protein kinase 2 (1388 aa).

The segment at Met1–Ala24 is disordered. One can recognise a Protein kinase domain in the interval Tyr92–Phe354. ATP is bound by residues Ile98–Val106 and Lys121. Residue Asp214 is the Proton acceptor of the active site. The 69-residue stretch at Asp357–Ser425 folds into the AGC-kinase C-terminal domain. The segment at Asn363 to Val784 is interaction with PPP1R12A. Residues Pro373 to Leu420 are interaction with NPM1. At Thr414 the chain carries Phosphothreonine; by ROCK2. Coiled-coil stretches lie at residues Ser439–Leu1024 and Ser1052–Asp1131. The 77-residue stretch at Thr497–Thr573 folds into the REM-1 domain. Positions Ala513–Glu530 are enriched in basic and acidic residues. Residues Ala513 to Asp532 form a disordered region. Residue Tyr722 is modified to Phosphotyrosine; by SRC. A RhoBD domain is found at Thr979–Pro1047. The RHOA binding stretch occupies residues Thr979 to Pro1047. Ser1137 is subject to Phosphoserine. A PH domain is found at Glu1150–Pro1349. Thr1212 is modified (phosphothreonine). A Phorbol-ester/DAG-type zinc finger spans residues Gly1260–Cys1315. A disordered region spans residues Val1345–Ser1388. Phosphoserine occurs at positions 1362 and 1374. The span at Ser1362–Arg1376 shows a compositional bias: polar residues.

This sequence belongs to the protein kinase superfamily. AGC Ser/Thr protein kinase family. In terms of assembly, homodimer. Interacts with IRS1. Interacts with RAF1. Interacts with RHOA (activated by GTP), RHOB, RHOC. Interacts with PPP1R12A. Interacts with EP300. Interacts with CHORDC1. Interacts with BRCA2. Interacts with NPM1; this interaction enhances its activity. Interacts with SORL1. Interacts with PJVK. Requires Mg(2+) as cofactor. In terms of processing, autophosphorylated. Phosphorylation at Tyr-722 reduces its binding to RHOA and is crucial for focal adhesion dynamics. Dephosphorylation by PTPN11 stimulates its RHOA binding activity. Cleaved by granzyme B during apoptosis. This leads to constitutive activation of the kinase and membrane blebbing. As to expression, highly expressed in brain, lung, liver, skeletal muscle, kidney and testis.

It localises to the cytoplasm. The protein localises to the cell membrane. The protein resides in the nucleus. Its subcellular location is the cytoskeleton. It is found in the microtubule organizing center. It localises to the centrosome. It catalyses the reaction L-seryl-[protein] + ATP = O-phospho-L-seryl-[protein] + ADP + H(+). It carries out the reaction L-threonyl-[protein] + ATP = O-phospho-L-threonyl-[protein] + ADP + H(+). Activated by RHOA binding. Inhibited by Y-27632. Functionally, protein kinase which is a key regulator of actin cytoskeleton and cell polarity. Involved in regulation of smooth muscle contraction, actin cytoskeleton organization, stress fiber and focal adhesion formation, neurite retraction, cell adhesion and motility via phosphorylation of ADD1, BRCA2, CNN1, EZR, DPYSL2, EP300, MSN, MYL9/MLC2, NPM1, RDX, PPP1R12A and VIM. Phosphorylates SORL1 and IRF4. Acts as a negative regulator of VEGF-induced angiogenic endothelial cell activation. Positively regulates the activation of p42/MAPK1-p44/MAPK3 and of p90RSK/RPS6KA1 during myogenic differentiation. Plays an important role in the timely initiation of centrosome duplication. Inhibits keratinocyte terminal differentiation. May regulate closure of the eyelids and ventral body wall through organization of actomyosin bundles. Plays a critical role in the regulation of spine and synaptic properties in the hippocampus. Plays a role in placental homeostasis during the perinatal period. Plays an important role in generating the circadian rhythm of the aortic myofilament Ca(2+) sensitivity and vascular contractility by modulating the myosin light chain phosphorylation. In Rattus norvegicus (Rat), this protein is Rho-associated protein kinase 2 (Rock2).